We begin with the raw amino-acid sequence, 348 residues long: Dihydroorotase (348 aa).

Positions 17 and 19 each coordinate Zn(2+). Residues 19 to 21 (HLR) and asparagine 45 each bind substrate. Residues lysine 103, histidine 140, and histidine 178 each coordinate Zn(2+). An N6-carboxylysine modification is found at lysine 103. Histidine 140 provides a ligand contact to substrate. Leucine 223 lines the substrate pocket. Position 251 (aspartate 251) interacts with Zn(2+). Aspartate 251 is a catalytic residue. Residues histidine 255 and alanine 267 each contribute to the substrate site.

The protein belongs to the metallo-dependent hydrolases superfamily. DHOase family. Class II DHOase subfamily. In terms of assembly, homodimer. Requires Zn(2+) as cofactor.

It carries out the reaction (S)-dihydroorotate + H2O = N-carbamoyl-L-aspartate + H(+). It participates in pyrimidine metabolism; UMP biosynthesis via de novo pathway; (S)-dihydroorotate from bicarbonate: step 3/3. Its function is as follows. Catalyzes the reversible cyclization of carbamoyl aspartate to dihydroorotate. This is Dihydroorotase from Shigella dysenteriae serotype 1 (strain Sd197).